We begin with the raw amino-acid sequence, 528 residues long: Vacuolar fusion protein MON1 homolog (528 aa).

Positions 1 to 16 are enriched in polar residues; sequence MEVEQTSVRSDTNSTC. Positions 1-50 are disordered; it reads MEVEQTSVRSDTNSTCEYLDAEGDPESPNLYQEADPDQEAEQQNHSIISE.

This sequence belongs to the MON1/SAND family. Component of the Mon1-Ccz1 guanyl-nucleotide exchange factor complex made up of Mon1, Ccz1 and Bulli; the interaction of Bulli with the Mon1-Ccz1 heterodimer is mediated via the C-terminal Mic1 domain of Bulli. Mon1 and Ccz1 form a stable complex which displays Rab7 GEF activity with or without Bulli; GEF activity is enhanced by Bulli possibly by improving membrane association of the complex. Interacts with Rab5 and Rab7; preferentially binds GTP-bound Rab5 and GDP-bound Rab7.

Its subcellular location is the cytoplasm. It localises to the cytosol. With respect to regulation, the Rab7 guanyl-nucleotide exchange factor (GEF) activity of the Mon1-Ccz1 complex is autoinhibited by the N-terminal disordered region of Mon1. GEF activity is stimulated by Rab5-mediated recruitment to membranes. In terms of biological role, part of the Mon1-Ccz1 guanyl-nucleotide exchange factor complex specific for Rab7 that promotes the exchange of GDP to GTP, converting Rab7 from an inactive GDP-bound form into an active GTP-bound form. Plays an important role in membrane trafficking through the secretory apparatus. Required for recruitment of Rab7 to endosomal and autophagosomal membranes to mediate endolysosomal and autolysosomal vesicle maturation. Required for fusion of multivesicular bodies and lysosomes but not their formation or trafficking. Involved in the replacement of Rab5 (and possibly Rab4) with Rab7, also known as Rab conversion or the Rab cascade, during endosomal maturation. The Mon1-Ccz1 complex is recruited to phosphatidylinositol 3-phosphate (PtdIns[3]P) enriched membranes by Rab5, which stimulates recruitment and guanyl-nucleotide exchange of Rab7. Together with Rab7 required for autolysosome formation in fat cells and autophagic degradation during starvation-induced basal and developmental autophagy. Involved in neuromuscular junction (NMJ) presynaptic bouton function and morphogenesis. Together with Rab7, regulates levels of postsynaptic glutamate receptor GluRIIA in the NMJ presynapse. This chain is Vacuolar fusion protein MON1 homolog, found in Drosophila melanogaster (Fruit fly).